The chain runs to 203 residues: MECRNPKVSSANITVLGVIQIMIGIYHVLMWYFLLLLYMGQIKGVFGTYEPVTYKMGTSLWGFAFVISGAFTVKAAKYQSRHMILCTMSLNILCIIITIVAASLTIVELSHFRSVSYRNYGQAKLGREVSRVLLCSYPLEFAIALLYSISSCAYLPLSSIVKSLVRKTWRLSSLAAWRQMIWLEAGNQEETLESVTEVVEGNS.

Transmembrane regions (helical) follow at residues 15–35 (VLGV…YFLL), 56–76 (MGTS…VKAA), 84–104 (ILCT…AASL), and 141–161 (FAIA…SSIV).

This sequence belongs to the MS4A family.

It is found in the membrane. In terms of biological role, may be involved in signal transduction as a component of a multimeric receptor complex. In Mus musculus (Mouse), this protein is Membrane-spanning 4-domains subfamily A member 13 (Ms4a13).